The following is a 267-amino-acid chain: Centromere protein Q (267 aa).

Composition is skewed to basic residues over residues 1–22 and 39–49; these read MSGK…LKQR and KRNRSHAKHLS. The segment at 1–54 is disordered; the sequence is MSGKARASRKKPQQVKRSLKQRANKEADLPENEVGNTAKRNRSHAKHLSSKVTG. At serine 49 the chain carries Phosphoserine. Residues 100–202 are a coiled coil; sequence IKRKEEIQCH…EEQEVKQVFH (103 aa).

It belongs to the CENP-Q/OKP1 family. Component of the CENPA-CAD complex, composed of CENPI, CENPK, CENPL, CENPO, CENPP, CENPQ, CENPR and CENPS. The CENPA-CAD complex interacts with the CENPA-NAC complex, at least composed of CENPA, CENPC, CENPH, CENPM, CENPN, CENPT and CENPU. In terms of processing, phosphorylation at Ser-49 is essential for CENPE recruitment to kinetochores and orderly chromosome congression.

The protein resides in the nucleus. It localises to the chromosome. Its subcellular location is the centromere. Its function is as follows. Component of the CENPA-CAD (nucleosome distal) complex, a complex recruited to centromeres which is involved in assembly of kinetochore proteins, mitotic progression and chromosome segregation. May be involved in incorporation of newly synthesized CENPA into centromeres via its interaction with the CENPA-NAC complex. Plays an important role in chromosome congression and in the recruitment of CENP-O complex (which comprises CENPO, CENPP, CENPQ and CENPU), CENPE and PLK1 to the kinetochores. In Mus musculus (Mouse), this protein is Centromere protein Q (Cenpq).